Consider the following 249-residue polypeptide: Methylthioribulose-1-phosphate dehydratase (249 aa).

2 residues coordinate Zn(2+): His103 and His105.

It belongs to the aldolase class II family. MtnB subfamily. Requires Zn(2+) as cofactor.

It carries out the reaction 5-(methylsulfanyl)-D-ribulose 1-phosphate = 5-methylsulfanyl-2,3-dioxopentyl phosphate + H2O. Its pathway is amino-acid biosynthesis; L-methionine biosynthesis via salvage pathway; L-methionine from S-methyl-5-thio-alpha-D-ribose 1-phosphate: step 2/6. Functionally, catalyzes the dehydration of methylthioribulose-1-phosphate (MTRu-1-P) into 2,3-diketo-5-methylthiopentyl-1-phosphate (DK-MTP-1-P). In Leptospira interrogans serogroup Icterohaemorrhagiae serovar copenhageni (strain Fiocruz L1-130), this protein is Methylthioribulose-1-phosphate dehydratase.